The following is a 609-amino-acid chain: Cationic amino acid transporter 3, mitochondrial (609 aa).

The transit peptide at 1–14 (MGCLRSLVRRKQFD) directs the protein to the mitochondrion. 14 helical membrane passes run 38–58 (LIAI…VGTV), 66–86 (ALAL…FCYA), 104–124 (ICIG…EYTI), 161–181 (IVVD…CCLG), 190–210 (GIVT…GSYL), 226–246 (FPYG…AYIG), 270–290 (ISLL…VGLV), 314–334 (AYLI…GSIL), 361–381 (QVPI…AFFM), 388–408 (GMVS…LLIV), 474–494 (IMFT…FLLP), 499–519 (YSLC…LICI), 534–554 (FICP…MYLL), and 558–578 (GAAT…VYIF).

It belongs to the amino acid-polyamine-organocation (APC) superfamily. Cationic amino acid transporter (CAT) (TC 2.A.3.3) family. As to expression, expressed in roots, stems, flowers, and leaves.

It localises to the mitochondrion membrane. Its function is as follows. Permease involved in the transport of the cationic neutral or acidic amino acids. The protein is Cationic amino acid transporter 3, mitochondrial (CAT3) of Arabidopsis thaliana (Mouse-ear cress).